The sequence spans 684 residues: Transcriptional regulatory protein RCO1 (684 aa).

At Met-1 the chain carries N-acetylmethionine. The disordered stretch occupies residues Met-1 to Leu-48. A compositionally biased stretch (low complexity) spans Arg-10 to Ser-29. Ser-68 bears the Phosphoserine mark. The PHD-type 1 zinc-finger motif lies at Glu-260–Lys-309. The PHD-type 2; atypical zinc-finger motif lies at Phe-414 to Thr-472. Ser-683 carries the phosphoserine modification.

In terms of assembly, component of the RPD3C(S) complex composed of at least EAF3, RCO1, RPD3, SIN3, and UME1.

It localises to the nucleus. Its function is as follows. Catalytic component of the RPD3C(S) histone deacetylase complex responsible for the deacetylation of lysine residues on the N-terminal part of the core histones (H2A, H2B, H3 and H4). Histone deacetylation gives a tag for epigenetic repression and plays an important role in transcriptional regulation, cell cycle progression, DNA damage response, osmotic stress response and developmental events. In Saccharomyces cerevisiae (strain ATCC 204508 / S288c) (Baker's yeast), this protein is Transcriptional regulatory protein RCO1 (RCO1).